The sequence spans 299 residues: Taste receptor type 2 member 1 (299 aa).

Topologically, residues 1–9 (MLESHLIIY) are extracellular. Residues 10-30 (FLLAVIQFLLGIFTNGIIVVV) traverse the membrane as a helical segment. Over 31–55 (NGIDLIKHRKMAPLDLLLSCLAVSR) the chain is Cytoplasmic. A helical membrane pass occupies residues 56–76 (IFLQLFIFYVNVIVIFFIEFI). Over 77–81 (MCSAN) the chain is Extracellular. A helical membrane pass occupies residues 82-102 (CAILLFINELELWLATWLGVF). The Cytoplasmic portion of the chain corresponds to 103–124 (YCAKVASVRHPLFXWLKMRISK). A helical transmembrane segment spans residues 125–145 (LVPWMILGSLLYVSMICVFHS). Over 146–178 (KYAGFMVPYFLRNFFSQNTTIQKEDTLAIQIFS) the chain is Extracellular. N163 is a glycosylation site (N-linked (GlcNAc...) asparagine). The chain crosses the membrane as a helical span at residues 179 to 199 (FVAEFSVPLLIFLVAVLLLIF). Residues 200–222 (SLGRHTRQMRNTVAGSRVPGRGA) lie on the Cytoplasmic side of the membrane. Residues 223–243 (PISALLSILSFLILYFSHCMI) traverse the membrane as a helical segment. At 244–257 (KVFLSSLKFHIRRF) the chain is on the extracellular side. A helical membrane pass occupies residues 258–278 (IFLFFILVIGIYPSGHSLILI). Residues 279-299 (LGNPKLKQNAKKFLLHSKCCQ) lie on the Cytoplasmic side of the membrane.

Belongs to the G-protein coupled receptor T2R family.

It is found in the membrane. Receptor that may play a role in the perception of bitterness and is gustducin-linked. May play a role in sensing the chemical composition of the gastrointestinal content. The activity of this receptor may stimulate alpha gustducin, mediate PLC-beta-2 activation and lead to the gating of TRPM5. This chain is Taste receptor type 2 member 1 (TAS2R1), found in Gorilla gorilla gorilla (Western lowland gorilla).